Consider the following 106-residue polypeptide: Urease subunit beta (106 aa).

This sequence belongs to the urease beta subunit family. As to quaternary structure, heterotrimer of UreA (gamma), UreB (beta) and UreC (alpha) subunits. Three heterotrimers associate to form the active enzyme.

It localises to the cytoplasm. It catalyses the reaction urea + 2 H2O + H(+) = hydrogencarbonate + 2 NH4(+). It functions in the pathway nitrogen metabolism; urea degradation; CO(2) and NH(3) from urea (urease route): step 1/1. The polypeptide is Urease subunit beta (Acinetobacter baumannii (strain ATCC 17978 / DSM 105126 / CIP 53.77 / LMG 1025 / NCDC KC755 / 5377)).